The sequence spans 230 residues: Lipopolysaccharide core heptose(II) kinase WaaY (230 aa).

It belongs to the protein kinase superfamily. RfaY/WaaY family.

The enzyme catalyses alpha-D-Glc-(1-&gt;3)-[L-alpha-D-Hep-(1-&gt;7)]-L-alpha-D-Hep-(1-&gt;3)-4-O-PO3(2-)-L-alpha-D-Hep-(1-&gt;5)-[alpha-Kdo-(2-&gt;4)]-alpha-Kdo-(2-&gt;6)-lipid A + ATP = alpha-D-Glc-(1-&gt;3)-[L-alpha-D-Hep-(1-&gt;7)]-4-O-PO3(2-)-L-alpha-D-Hep-(1-&gt;3)-4-O-PO3(2-)-L-alpha-D-Hep-(1-&gt;5)-[alpha-Kdo-(2-&gt;4)]-alpha-Kdo-(2-&gt;6)-lipid A + ADP + H(+). The protein operates within bacterial outer membrane biogenesis; LPS core biosynthesis. Kinase involved in the biosynthesis of the core oligosaccharide region of lipopolysaccharide (LPS). Catalyzes the phosphorylation of the second heptose unit (HepII) of the inner core. The protein is Lipopolysaccharide core heptose(II) kinase WaaY of Escherichia coli.